Consider the following 407-residue polypeptide: Arginine biosynthesis bifunctional protein ArgJ (407 aa).

The substrate site is built by Thr157, Lys183, Thr194, Glu280, Asn402, and Thr407. Thr194 (nucleophile) is an active-site residue.

The protein belongs to the ArgJ family. Heterotetramer of two alpha and two beta chains.

It localises to the cytoplasm. It carries out the reaction N(2)-acetyl-L-ornithine + L-glutamate = N-acetyl-L-glutamate + L-ornithine. The catalysed reaction is L-glutamate + acetyl-CoA = N-acetyl-L-glutamate + CoA + H(+). It participates in amino-acid biosynthesis; L-arginine biosynthesis; L-ornithine and N-acetyl-L-glutamate from L-glutamate and N(2)-acetyl-L-ornithine (cyclic): step 1/1. It functions in the pathway amino-acid biosynthesis; L-arginine biosynthesis; N(2)-acetyl-L-ornithine from L-glutamate: step 1/4. Catalyzes two activities which are involved in the cyclic version of arginine biosynthesis: the synthesis of N-acetylglutamate from glutamate and acetyl-CoA as the acetyl donor, and of ornithine by transacetylation between N(2)-acetylornithine and glutamate. The polypeptide is Arginine biosynthesis bifunctional protein ArgJ (Bacillus anthracis).